We begin with the raw amino-acid sequence, 337 residues long: Calcium-binding protein 39-like (337 aa).

This sequence belongs to the Mo25 family. As to quaternary structure, component of a trimeric complex composed of STK11/LKB1, STRAD (STRADA or STRADB) and CAB39/MO25 (CAB39/MO25alpha or CAB39L/MO25beta): the complex tethers STK11/LKB1 in the cytoplasm and stimulates its catalytic activity.

Functionally, component of a complex that binds and activates STK11/LKB1. In the complex, required to stabilize the interaction between CAB39/MO25 (CAB39/MO25alpha or CAB39L/MO25beta) and STK11/LKB1. The polypeptide is Calcium-binding protein 39-like (CAB39L) (Homo sapiens (Human)).